Reading from the N-terminus, the 550-residue chain is MTPADLATLIKETAVEVLTSRELDTSVLPEQVVVERPRNPEHGDYATNIALQVAKKVGQNPRDLATWLAEALAADDAIDSAEIAGPGFLNIRLAAAAQGEIVAKILAQGETFGNSDHLSHLDVNLEFVSANPTGPIHLGGTRWAAVGDSLGRVLEASGAKVTREYYFNDHGRQIDRFALSLLAAAKGEPTPEDGYGGEYIKEIAEAIVEKHPEALALEPAATQELFRAEGVEMMFEHIKSSLHEFGTDFDVYYHENSLFESGAVDKAVQVLKDNGNLYENEGAWWLRSTEFGDDKDRVVIKSDGDAAYIAGDIAYVADKFSRGHNLNIYMLGADHHGYIARLKAAAAALGYKPEGVEVLIGQMVNLLRDGKAVRMSKRAGTVVTLDDLVEAIGIDAARYSLIRSSVDSSLDIDLGLWESQSSDNPVYYVQYGHARLCSIARKAETLGVTEEGADLSLLTHDREGDLIRTLGEFPAVVKAAADLREPHRIARYAEELAGTFHRFYDSCHILPKVDEDTAPIHTARLALAAATRQTLANALHLVGVSAPEKM.

A 'HIGH' region motif is present at residues 130 to 140 (ANPTGPIHLGG).

Belongs to the class-I aminoacyl-tRNA synthetase family. In terms of assembly, monomer.

It localises to the cytoplasm. It catalyses the reaction tRNA(Arg) + L-arginine + ATP = L-arginyl-tRNA(Arg) + AMP + diphosphate. The polypeptide is Arginine--tRNA ligase (argS) (Corynebacterium glutamicum (strain ATCC 13032 / DSM 20300 / JCM 1318 / BCRC 11384 / CCUG 27702 / LMG 3730 / NBRC 12168 / NCIMB 10025 / NRRL B-2784 / 534)).